The sequence spans 397 residues: Phosphoglycerate kinase (397 aa).

Residues 23–25 (DFN), Arg38, 61–64 (HMGK), Arg122, and Arg155 contribute to the substrate site. ATP-binding positions include Lys206, Gly296, Glu327, and 353–356 (GGDS).

The protein belongs to the phosphoglycerate kinase family. In terms of assembly, monomer.

It localises to the cytoplasm. The enzyme catalyses (2R)-3-phosphoglycerate + ATP = (2R)-3-phospho-glyceroyl phosphate + ADP. Its pathway is carbohydrate degradation; glycolysis; pyruvate from D-glyceraldehyde 3-phosphate: step 2/5. This chain is Phosphoglycerate kinase, found in Clostridium perfringens (strain ATCC 13124 / DSM 756 / JCM 1290 / NCIMB 6125 / NCTC 8237 / Type A).